We begin with the raw amino-acid sequence, 971 residues long: Isoleucine--tRNA ligase (971 aa).

The 'HIGH' region signature appears at 64–74 (PYANGHIHIGH). E602 is an L-isoleucyl-5'-AMP binding site. The 'KMSKS' region motif lies at 643-647 (KMSKS). K646 contributes to the ATP binding site.

This sequence belongs to the class-I aminoacyl-tRNA synthetase family. IleS type 1 subfamily. In terms of assembly, monomer.

It localises to the cytoplasm. It carries out the reaction tRNA(Ile) + L-isoleucine + ATP = L-isoleucyl-tRNA(Ile) + AMP + diphosphate. Functionally, catalyzes the attachment of isoleucine to tRNA(Ile). As IleRS can inadvertently accommodate and process structurally similar amino acids such as valine, to avoid such errors it has two additional distinct tRNA(Ile)-dependent editing activities. One activity is designated as 'pretransfer' editing and involves the hydrolysis of activated Val-AMP. The other activity is designated 'posttransfer' editing and involves deacylation of mischarged Val-tRNA(Ile). The polypeptide is Isoleucine--tRNA ligase (Bartonella quintana (strain Toulouse) (Rochalimaea quintana)).